A 205-amino-acid polypeptide reads, in one-letter code: Adenylyl-sulfate kinase (205 aa).

Residue glycine 35–serine 42 participates in ATP binding. Serine 109 (phosphoserine intermediate) is an active-site residue.

The protein belongs to the APS kinase family.

The enzyme catalyses adenosine 5'-phosphosulfate + ATP = 3'-phosphoadenylyl sulfate + ADP + H(+). It functions in the pathway sulfur metabolism; hydrogen sulfide biosynthesis; sulfite from sulfate: step 2/3. Functionally, catalyzes the synthesis of activated sulfate. The sequence is that of Adenylyl-sulfate kinase from Acaryochloris marina (strain MBIC 11017).